We begin with the raw amino-acid sequence, 295 residues long: ATP synthase gamma chain (295 aa).

Belongs to the ATPase gamma chain family. As to quaternary structure, F-type ATPases have 2 components, CF(1) - the catalytic core - and CF(0) - the membrane proton channel. CF(1) has five subunits: alpha(3), beta(3), gamma(1), delta(1), epsilon(1). CF(0) has three main subunits: a, b and c.

It is found in the cell inner membrane. Functionally, produces ATP from ADP in the presence of a proton gradient across the membrane. The gamma chain is believed to be important in regulating ATPase activity and the flow of protons through the CF(0) complex. This is ATP synthase gamma chain from Maricaulis maris (strain MCS10) (Caulobacter maris).